Here is a 239-residue protein sequence, read N- to C-terminus: Derlin-2 (239 aa).

Topologically, residues 1–56 (MAYQSLRLEYLQIPPVSRAYTTACVLTTAAVQLELITPFQLYFNPELIFKHFQIWR) are cytoplasmic. Residues 57-77 (LITNFLFFGPVGFNFLFNMIF) traverse the membrane as a helical segment. Residues 78–98 (LYRYCRMLEEGSFRGRTADFV) are Lumenal-facing. The chain crosses the membrane as a helical span at residues 99 to 119 (FMFLFGGFLMTLFGLFVSLVF). Topologically, residues 120–150 (LGQAFTIMLVYVWSRRNPYVRMNFFGLLNFQ) are cytoplasmic. A helical membrane pass occupies residues 151–171 (APFLPWVLMGFSLLLGNSIIV). Asp-172 is a topological domain (lumenal). A helical membrane pass occupies residues 173 to 193 (LLGIAVGHIYFFLEDVFPNQP). The Cytoplasmic portion of the chain corresponds to 194 to 239 (GGIRILKTPSILKAIFDTPDEDPNYNPLPEERPGGFAWGEGQRLGG). Positions 215-239 (DPNYNPLPEERPGGFAWGEGQRLGG) are disordered. The segment covering 229–239 (FAWGEGQRLGG) has biased composition (gly residues).

The protein belongs to the derlin family. As to quaternary structure, forms homo- and heterooligomers with DERL3 and, to a lesser extent, with DERL1. Interacts with the SEL1L/SYVN1 and VCP/SELENOS protein complexes. Mediates association between VCP and EDEM1, as well as that between VCP and the misfolded glycoproteins. Interacts with OS9. Interacts with SELENOK and SELENOS. Interacts with the signal recognition particle/SRP and the SRP receptor; in the process of endoplasmic reticulum stress-induced pre-emptive quality control. Interacts with CCDC47.

The protein localises to the endoplasmic reticulum membrane. Functionally, functional component of endoplasmic reticulum-associated degradation (ERAD) for misfolded lumenal glycoproteins, but not that of misfolded nonglycoproteins. May act by forming a channel that allows the retrotranslocation of misfolded glycoproteins into the cytosol where they are ubiquitinated and degraded by the proteasome. May mediate the interaction between VCP and misfolded glycoproteins. May also be involved in endoplasmic reticulum stress-induced pre-emptive quality control, a mechanism that selectively attenuates the translocation of newly synthesized proteins into the endoplasmic reticulum and reroutes them to the cytosol for proteasomal degradation. In Pongo abelii (Sumatran orangutan), this protein is Derlin-2.